The following is a 570-amino-acid chain: Proline--tRNA ligase (570 aa).

Belongs to the class-II aminoacyl-tRNA synthetase family. ProS type 1 subfamily. Homodimer.

Its subcellular location is the cytoplasm. The enzyme catalyses tRNA(Pro) + L-proline + ATP = L-prolyl-tRNA(Pro) + AMP + diphosphate. Catalyzes the attachment of proline to tRNA(Pro) in a two-step reaction: proline is first activated by ATP to form Pro-AMP and then transferred to the acceptor end of tRNA(Pro). As ProRS can inadvertently accommodate and process non-cognate amino acids such as alanine and cysteine, to avoid such errors it has two additional distinct editing activities against alanine. One activity is designated as 'pretransfer' editing and involves the tRNA(Pro)-independent hydrolysis of activated Ala-AMP. The other activity is designated 'posttransfer' editing and involves deacylation of mischarged Ala-tRNA(Pro). The misacylated Cys-tRNA(Pro) is not edited by ProRS. The protein is Proline--tRNA ligase of Clostridium perfringens (strain ATCC 13124 / DSM 756 / JCM 1290 / NCIMB 6125 / NCTC 8237 / Type A).